The chain runs to 103 residues: Major carboxysome shell protein CsoS1 (103 aa).

A BMC domain is found at 9 to 94 (ALGMIETRGL…PHREVEPALG (86 aa)).

This sequence belongs to the bacterial microcompartments protein family. CsoS1 subfamily. As to quaternary structure, homohexamer with a small central pore. A CsoS1-CsoS1D-CsoS2 complex can be isolated following expression in E.coli. Forms a CsoS2-CsoS1-RuBisCO complex.

Its subcellular location is the carboxysome. The major shell protein of the carboxysome, a polyhedral inclusion where RuBisCO (ribulose bisphosphate carboxylase, ccbL-ccbS) is sequestered. Assembles into hexamers which make sheets that form the facets of the polyhedral carboxysome. There are estimated to be 538 CsoS1 hexamers per carboxysome; note this number includes the probable carboxysome shell vertex proteins CsoS4A and CsoS4B. The polypeptide is Major carboxysome shell protein CsoS1 (Prochlorococcus marinus subsp. pastoris (strain CCMP1986 / NIES-2087 / MED4)).